A 947-amino-acid polypeptide reads, in one-letter code: Zinc finger CCCH domain-containing protein 18 (947 aa).

N-acetylmethionine is present on M1. Disordered regions lie at residues 1–218 (MDVA…PRPT), 275–295 (GGPVVDEILPPPPPEPPTESA), and 387–921 (YTEA…TLSR). A phosphoserine mark is found at S6, S32, S44, S57, S63, S70, S74, S79, and S91. A compositionally biased stretch (basic and acidic residues) spans 73-85 (KSQDQDSEAHELS). The segment covering 94–104 (EEGDDAEEDGT) has biased composition (acidic residues). A Phosphothreonine modification is found at T104. A phosphoserine mark is found at S105 and S113. Over residues 105-119 (SDLRDEASSVTRELD) the composition is skewed to basic and acidic residues. Composition is skewed to acidic residues over residues 120–131 (EHELDYDEEVPE) and 138–153 (QEEEAEKAGAEEEEEK). A compositionally biased stretch (basic and acidic residues) spans 160 to 185 (EEGKPDVQSVGEKEPTEAAKEKKKED). At S168 the chain carries Phosphoserine. Acidic residues predominate over residues 186 to 202 (DDGEIDDGEIDDDDLEE). The span at 203 to 212 (GEVKDPSDRK) shows a compositional bias: basic and acidic residues. A C3H1-type zinc finger spans residues 214–240 (RPRPTCRFFMKGNCTWGMNCRFIHPGV). Basic and acidic residues predominate over residues 391-479 (EPYHNYRDRE…DRDKDKEKPK (89 aa)). Position 482 is a phosphoserine (S482). A Glycyl lysine isopeptide (Lys-Gly) (interchain with G-Cter in SUMO2) cross-link involves residue K505. A compositionally biased stretch (basic and acidic residues) spans 505–515 (KRADEWKDPWR). 3 positions are modified to phosphoserine: S527, S529, and S531. Residues 540 to 601 (SASSASASNS…SRSRSFSSSP (62 aa)) show a composition bias toward low complexity. A compositionally biased stretch (pro residues) spans 602 to 611 (SPSPTPSPHR). Glycyl lysine isopeptide (Lys-Gly) (interchain with G-Cter in SUMO2) cross-links involve residues K617 and K656. Residues 656-665 (KPGDLREARR) are compositionally biased toward basic and acidic residues. 2 stretches are compositionally biased toward low complexity: residues 687-720 (GSSYSGSSSRSRSLSVSSVSSVSSATSSSSSVHS) and 731-745 (ASPVSSASSRSPTPA). A compositionally biased stretch (basic and acidic residues) spans 755 to 769 (KKEDGVREEKRKRDP). The span at 773-804 (PPKSSKAPAGGKASQQAAAPQQAAPGQPQQGS) shows a compositional bias: low complexity. K809 is modified (N6-acetyllysine). K812 participates in a covalent cross-link: Glycyl lysine isopeptide (Lys-Gly) (interchain with G-Cter in SUMO2). The span at 819 to 836 (AAEKGSRKRYEPSDKDRQ) shows a compositional bias: basic and acidic residues. Phosphoserine is present on residues S837, S846, S862, S887, and S890. Residues 887 to 918 (SPQSKSSSKVTSVPGKATDTATAGTKSGKAST) show a composition bias toward low complexity. K902 participates in a covalent cross-link: Glycyl lysine isopeptide (Lys-Gly) (interchain with G-Cter in SUMO2). The stretch at 915–944 (KASTLSRREELLKQLKAVEDAIARKRAKIP) forms a coiled coil.

Interacts with ZFC3H1 in a RNase-insensitive manner.

The protein localises to the nucleus. This is Zinc finger CCCH domain-containing protein 18 (Zc3h18) from Rattus norvegicus (Rat).